The chain runs to 142 residues: ATP synthase epsilon chain (142 aa).

It belongs to the ATPase epsilon chain family. In terms of assembly, F-type ATPases have 2 components, CF(1) - the catalytic core - and CF(0) - the membrane proton channel. CF(1) has five subunits: alpha(3), beta(3), gamma(1), delta(1), epsilon(1). CF(0) has three main subunits: a, b and c.

The protein localises to the cell inner membrane. Functionally, produces ATP from ADP in the presence of a proton gradient across the membrane. This Haemophilus influenzae (strain 86-028NP) protein is ATP synthase epsilon chain.